The primary structure comprises 163 residues: Halocyanin (163 aa).

The N-terminal stretch at 1–24 (MKDISRRRFVLGTGATVAAATLAG) is a signal peptide. Cys-25 carries the N-acetylcysteine modification. Residue Cys-25 is the site of S-archaeol cysteine attachment. Gly residues predominate over residues 26–38 (NGNGNGNGNGNGN). Positions 26–48 (NGNGNGNGNGNGNGEPDTPEGRA) are disordered. A Plastocyanin-like domain is found at 48–163 (ADQFLTDNDA…QGMYGAVIVE (116 aa)). Positions 110, 148, 151, and 156 each coordinate Cu cation.

It is found in the cell membrane. Functionally, electron donor. Binds one copper ion. In Natronomonas pharaonis (Natronobacterium pharaonis), this protein is Halocyanin (hcy).